Consider the following 809-residue polypeptide: Leucine-rich repeat and calponin homology domain-containing protein (809 aa).

Residues 27–53 (GSASLPGSGTGSGSGIGHAGNTSSSTS) form a disordered region. The segment covering 34-44 (SGTGSGSGIGH) has biased composition (gly residues). LRR repeat units follow at residues 72-96 (EAHF…GTKY), 98-121 (LTDT…VTTF), 122-144 (AFLE…VKQL), 145-168 (SSLT…CFLP), 170-189 (QVLL…LGRL), 191-213 (QTLT…LGEL), 214-236 (RSLR…LTCL), 238-258 (LISL…IRHM), and 260-282 (TLVE…CMRG). Disordered regions lie at residues 295–373 (TKDE…LHCV), 423–442 (LSYA…QDDD), and 490–550 (KHPN…VDDV). Over residues 319-336 (HNSSGNVLEASTTGSTNN) the composition is skewed to polar residues. Residues 351–368 (GLDKRWSHDAPTKSKTDS) show a composition bias toward basic and acidic residues. A compositionally biased stretch (polar residues) spans 518–532 (NTLPKSIMKQNSNQI). A Calponin-homology (CH) domain is found at 662-776 (QREETELMSQ…TVGELFRLHG (115 aa)). The interval 783 to 809 (GNSSGAATPTKSPTRTTRATMSPTPLA) is disordered. The span at 788-809 (AATPTKSPTRTTRATMSPTPLA) shows a compositional bias: polar residues.

The protein resides in the cytoplasm. The protein localises to the cytoskeleton. It localises to the cell cortex. Its subcellular location is the cleavage furrow. May play a role in the stabilization of the actin-rich cell cortex during cell division. This chain is Leucine-rich repeat and calponin homology domain-containing protein, found in Drosophila melanogaster (Fruit fly).